The following is a 1760-amino-acid chain: Chitin synthase csmB (1760 aa).

Over residues 1-17 the composition is skewed to low complexity; it reads MSNRFSVYSSHSTGVSS. The tract at residues 1 to 23 is disordered; it reads MSNRFSVYSSHSTGVSSARPSAP. A Myosin motor domain is found at 1–374; sequence MSNRFSVYSS…TVSITVVDIP (374 aa). A glycan (N-linked (GlcNAc...) asparagine) is linked at Asn-275. Residues 344–363 form a disordered region; the sequence is LDNDPSTSGGSGPGGQWTDD. Position 374 (Pro-374) is a region of interest, actin-binding. 2 helical membrane passes run 731–751 and 767–787; these read IWVG…LRWI and LVLM…IIAF. N-linked (GlcNAc...) asparagine glycans are attached at residues Asn-878, Asn-906, and Asn-995. The chain crosses the membrane as a helical span at residues 1029–1049; it reads ILLSFTVLICAVILVKFVSAL. A glycan (N-linked (GlcNAc...) asparagine) is linked at Asn-1394. 3 helical membrane passes run 1419-1439, 1452-1472, and 1480-1500; these read FVVL…VYLG, FPMI…IIFL, and IGWM…LPLY. 2 N-linked (GlcNAc...) asparagine glycosylation sites follow: Asn-1584 and Asn-1652. Residues 1702–1758 form the DEK-C domain; sequence GPDEGAITEAIRACLAEVDLDTVTKKQVRALVEQRLQTTLMGDKRTFLDRQIDHELA.

In the N-terminal section; belongs to the TRAFAC class myosin-kinesin ATPase superfamily. Myosin family. It in the C-terminal section; belongs to the chitin synthase family. Class V subfamily.

Its subcellular location is the cell membrane. The protein localises to the cell septum. The protein resides in the cell tip. It catalyses the reaction [(1-&gt;4)-N-acetyl-beta-D-glucosaminyl](n) + UDP-N-acetyl-alpha-D-glucosamine = [(1-&gt;4)-N-acetyl-beta-D-glucosaminyl](n+1) + UDP + H(+). Functionally, polymerizes chitin, a structural polymer of the cell wall and septum, by transferring the sugar moiety of UDP-GlcNAc to the non-reducing end of the growing chitin polymer. Plays an important role in septal growth or maintenance. Mediates colony spore formation. This is Chitin synthase csmB from Aspergillus niger (strain ATCC MYA-4892 / CBS 513.88 / FGSC A1513).